A 463-amino-acid polypeptide reads, in one-letter code: tRNA modification GTPase MnmE (463 aa).

(6S)-5-formyl-5,6,7,8-tetrahydrofolate contacts are provided by Arg30, Glu92, and Arg132. The region spanning 227-386 (GLRVALVGRP…LVQAVLERCG (160 aa)) is the TrmE-type G domain. Residue Asn237 participates in K(+) binding. Residues 237 to 242 (NVGKSS), 256 to 262 (TDLPGTT), 281 to 284 (DTAG), and 342 to 345 (NKAD) contribute to the GTP site. Position 241 (Ser241) interacts with Mg(2+). The K(+) site is built by Thr256, Leu258, and Thr261. Position 262 (Thr262) interacts with Mg(2+). Lys463 is a (6S)-5-formyl-5,6,7,8-tetrahydrofolate binding site.

The protein belongs to the TRAFAC class TrmE-Era-EngA-EngB-Septin-like GTPase superfamily. TrmE GTPase family. In terms of assembly, homodimer. Heterotetramer of two MnmE and two MnmG subunits. The cofactor is K(+).

The protein localises to the cytoplasm. Exhibits a very high intrinsic GTPase hydrolysis rate. Involved in the addition of a carboxymethylaminomethyl (cmnm) group at the wobble position (U34) of certain tRNAs, forming tRNA-cmnm(5)s(2)U34. This is tRNA modification GTPase MnmE from Synechococcus sp. (strain CC9311).